Consider the following 851-residue polypeptide: UPF0182 protein CYA_1810 (851 aa).

Helical transmembrane passes span 7–27, 47–67, 76–96, 141–161, 168–188, 220–240, and 259–279; these read GLVLLLWAGLGILAITALASF, VLARWGLGLGAFAFALAVVGS, ASTAGAWAIALGLSGGLAWSL, FNLVLLTLITVALIYLVELGL, LALSLFAQRHLLILGGALFLL, LPATTLMSGVAFLTAVGFWAL, and WASSLLAPALLWGAYLGFGLL.

This sequence belongs to the UPF0182 family.

It localises to the cell membrane. The sequence is that of UPF0182 protein CYA_1810 from Synechococcus sp. (strain JA-3-3Ab) (Cyanobacteria bacterium Yellowstone A-Prime).